A 684-amino-acid polypeptide reads, in one-letter code: MTAPNPSSLVAPIRVPAGTTAGTAVREAGLPGKGEDAIVVVRVDGALKDLSWTPESDTEVEPVAANTEDGRSVIRHSAAHVLAQAVQELFPQAKLGIGPPITDGFYYDFGIDHAFTPEDLTALEKKMKQIIKEGQRFSRRVYESVEEAQAELANEPFKLELVSDKSGADDPEVMEVGGDELSAYDNLNPRTGEREWFDLCRGPHIPTTKHIPAFRLTRSSAAYWRGNQANASMQRVYGTAWESQEALDKHLELLEEAQRRDHRKLGVELDLFSFPDEIGSGLPVFHPKGGIVRKELEDYSRAKHTAAGYEFVNTPHITKENLYQTSGHLDWYSDGMFPPMHIDAELNEDGTVRKPGQNYYLKPMNCPMHHLIYRARGRSYRELPLRLFEFGSVYRYEKSGVVHGLTRVRGMTQDDAHIYTTREQMHEELTSLLRFVLDLLSDYGLDDFYLELSTKDEAKFVGSDEVWEEATKTLEQVALDSGLQLVPDPGGAAFYGPKISVQAKDALGRSWQMSTIQLDFNMPERFNLEYTAADGTRKQPVLIHRALFGSIERFFGVLTEHYAGAFPAWLSPVQAVGIPIADAHAPYLNDIVSQLKAQGIRAEVDSSDDRMNKKIVNHTNQRVPFLLLAGDRDVEAGAVSFRFRDRTQVNGVPRDEAVAAIVDWVNRRENVSPTAELLKLGASD.

Residues 1–64 (MTAPNPSSLV…ESDTEVEPVA (64 aa)) enclose the TGS domain. The catalytic stretch occupies residues 261-567 (DHRKLGVELD…LTEHYAGAFP (307 aa)). Cys366, His417, and His544 together coordinate Zn(2+).

Belongs to the class-II aminoacyl-tRNA synthetase family. Homodimer. Requires Zn(2+) as cofactor.

It is found in the cytoplasm. The catalysed reaction is tRNA(Thr) + L-threonine + ATP = L-threonyl-tRNA(Thr) + AMP + diphosphate + H(+). Catalyzes the attachment of threonine to tRNA(Thr) in a two-step reaction: L-threonine is first activated by ATP to form Thr-AMP and then transferred to the acceptor end of tRNA(Thr). Also edits incorrectly charged L-seryl-tRNA(Thr). This is Threonine--tRNA ligase from Mycobacteroides abscessus (strain ATCC 19977 / DSM 44196 / CCUG 20993 / CIP 104536 / JCM 13569 / NCTC 13031 / TMC 1543 / L948) (Mycobacterium abscessus).